Here is a 484-residue protein sequence, read N- to C-terminus: Putative cysteine ligase BshC (484 aa).

Positions 372–435 (RAFRDRVEGL…AARDEVLARH (64 aa)) form a coiled coil.

Belongs to the BshC family.

In Thermus thermophilus (strain ATCC BAA-163 / DSM 7039 / HB27), this protein is Putative cysteine ligase BshC.